The chain runs to 384 residues: Putative dioxygenase SSO1533 (384 aa).

Fe cation contacts are provided by His-296, Glu-302, and His-332.

This sequence belongs to the homogentisate dioxygenase family. Fe cation is required as a cofactor.

This is Putative dioxygenase SSO1533 from Saccharolobus solfataricus (strain ATCC 35092 / DSM 1617 / JCM 11322 / P2) (Sulfolobus solfataricus).